Reading from the N-terminus, the 737-residue chain is Procollagen-lysine,2-oxoglutarate 5-dioxygenase 2 (737 aa).

A signal peptide spans 1–25 (MGGCTVKPQLLLLALVLHPWNPCLG). 3 N-linked (GlcNAc...) asparagine glycosylation sites follow: N63, N209, and N297. Position 320 is a phosphothreonine (T320). Phosphotyrosine is present on Y323. N365 and N522 each carry an N-linked (GlcNAc...) asparagine glycan. The 94-residue stretch at 644 to 737 (KGFALLNFVV…RYIAVSFIDP (94 aa)) folds into the Fe2OG dioxygenase domain. 2 residues coordinate Fe cation: H666 and D668. N696 carries an N-linked (GlcNAc...) asparagine glycan. At K704 the chain carries N6-succinyllysine. H718 is a Fe cation binding site. N725 carries N-linked (GlcNAc...) asparagine glycosylation. R728 is a catalytic residue.

In terms of assembly, homodimer. Fe(2+) serves as cofactor. L-ascorbate is required as a cofactor. As to expression, highly expressed in pancreas and muscle. Isoform 1 and isoform 2 are expressed in the majority of the examined cell types. Isoform 2 is specifically expressed in skin, lung, dura and aorta.

Its subcellular location is the rough endoplasmic reticulum membrane. The catalysed reaction is L-lysyl-[collagen] + 2-oxoglutarate + O2 = (5R)-5-hydroxy-L-lysyl-[collagen] + succinate + CO2. Functionally, forms hydroxylysine residues in -Xaa-Lys-Gly- sequences in collagens. These hydroxylysines serve as sites of attachment for carbohydrate units and are essential for the stability of the intermolecular collagen cross-links. This chain is Procollagen-lysine,2-oxoglutarate 5-dioxygenase 2, found in Homo sapiens (Human).